The following is a 456-amino-acid chain: Chromosomal replication initiator protein DnaA (456 aa).

The tract at residues 1–83 is domain I, interacts with DnaA modulators; it reads MTASLWQQCL…LRFDIGNRPH (83 aa). Residues 83–119 form a domain II region; the sequence is HPVAIARAPARGAAPVNNLQKSWESKADAKPEPNHKS. Positions 120–336 are domain III, AAA+ region; the sequence is NTNVNYTFEN…GALNRVIANA (217 aa). Positions 164, 166, 167, and 168 each coordinate ATP. Positions 337–456 are domain IV, binds dsDNA; it reads NFTGRAINID…YSNLIRTLSS (120 aa).

This sequence belongs to the DnaA family. Oligomerizes as a right-handed, spiral filament on DNA at oriC.

The protein localises to the cytoplasm. Plays an essential role in the initiation and regulation of chromosomal replication. ATP-DnaA binds to the origin of replication (oriC) to initiate formation of the DNA replication initiation complex once per cell cycle. Binds the DnaA box (a 9 base pair repeat at the origin) and separates the double-stranded (ds)DNA. Forms a right-handed helical filament on oriC DNA; dsDNA binds to the exterior of the filament while single-stranded (ss)DNA is stabiized in the filament's interior. The ATP-DnaA-oriC complex binds and stabilizes one strand of the AT-rich DNA unwinding element (DUE), permitting loading of DNA polymerase. After initiation quickly degrades to an ADP-DnaA complex that is not apt for DNA replication. Binds acidic phospholipids. In Aeromonas salmonicida (strain A449), this protein is Chromosomal replication initiator protein DnaA.